A 436-amino-acid polypeptide reads, in one-letter code: Platelet-activating factor acetylhydrolase (436 aa).

An N-terminal signal peptide occupies residues M1 to P21. N-linked (GlcNAc...) asparagine glycans are attached at residues N76 and N200. S271 serves as the catalytic Nucleophile. The active-site Charge relay system is D294. A glycan (N-linked (GlcNAc...) asparagine) is linked at N324. H349 functions as the Charge relay system in the catalytic mechanism.

The protein belongs to the AB hydrolase superfamily. Lipase family. Post-translationally, N-glycosylated. As to expression, plasma.

It is found in the secreted. Its subcellular location is the extracellular space. It catalyses the reaction a 1-O-alkyl-2-acetyl-sn-glycero-3-phosphocholine + H2O = a 1-O-alkyl-sn-glycero-3-phosphocholine + acetate + H(+). The enzyme catalyses 1-O-decyl-2-acetyl-sn-glycero-3-phosphocholine + H2O = 1-O-decyl-sn-glycero-3-phosphocholine + acetate + H(+). It carries out the reaction 1-O-dodecyl-2-acetyl-sn-glycero-3-phosphocholine + H2O = 1-O-dodecyl-sn-glycero-3-phosphocholine + acetate + H(+). The catalysed reaction is 1-O-tetradecyl-2-acetyl-sn-glycero-3-phosphocholine + H2O = 1-O-tetradecyl-sn-glycero-3-phosphocholine + acetate + H(+). It catalyses the reaction 1-O-hexadecyl-2-acetyl-sn-glycero-3-phosphocholine + H2O = 1-O-hexadecyl-sn-glycero-3-phosphocholine + acetate + H(+). The enzyme catalyses 1-O-octadecyl-2-acetyl-sn-glycero-3-phosphocholine + H2O = 1-O-octadecyl-sn-glycero-3-phosphocholine + acetate + H(+). It carries out the reaction 1-hexadecanoyl-2-acetyl-sn-glycero-3-phosphocholine + H2O = 1-hexadecanoyl-sn-glycero-3-phosphocholine + acetate + H(+). The catalysed reaction is 1-hexadecanoyl-2-propionyl-sn-glycero-3-phosphocholine + H2O = propanoate + 1-hexadecanoyl-sn-glycero-3-phosphocholine + H(+). It catalyses the reaction 1-hexadecanoyl-2-butanoyl-sn-glycero-3-phosphocholine + H2O = butanoate + 1-hexadecanoyl-sn-glycero-3-phosphocholine + H(+). The enzyme catalyses 1-hexadecanoyl-2-pentanoyl-sn-glycero-3-phosphocholine + H2O = pentanoate + 1-hexadecanoyl-sn-glycero-3-phosphocholine + H(+). It carries out the reaction 1-hexadecanoyl-2-glutaroyl-sn-glycero-3-phosphocholine + H2O = glutarate + 1-hexadecanoyl-sn-glycero-3-phosphocholine + H(+). The catalysed reaction is 1-hexadecanoyl-2-(5-oxopentanoyl)-sn-glycero-3-phosphocholine + H2O = 5-oxopentanoate + 1-hexadecanoyl-sn-glycero-3-phosphocholine + H(+). It catalyses the reaction 1-hexadecanoyl-2-(9-oxononanoyl)-sn-glycero-3-phosphocholine + H2O = 9-oxononanoate + 1-hexadecanoyl-sn-glycero-3-phosphocholine + H(+). The enzyme catalyses 1-hexadecanoyl-2-[9-hydroperoxy-(10E-octadecenoyl)]-sn-glycero-3-phosphocholine + H2O = 9-hydroperoxy-10E-octadecenoate + 1-hexadecanoyl-sn-glycero-3-phosphocholine + H(+). It carries out the reaction 1-hexadecanoyl-2-(10-hydroperoxy-8E-octadecenoyl)-sn-glycero-3-phosphocholine + H2O = 10-hydroperoxy-(8E)-octadecenoate + 1-hexadecanoyl-sn-glycero-3-phosphocholine + H(+). Its function is as follows. Lipoprotein-associated calcium-independent phospholipase A2 involved in phospholipid catabolism during inflammatory and oxidative stress response. At the lipid-aqueous interface, hydrolyzes the ester bond of fatty acyl group attached at sn-2 position of phospholipids (phospholipase A2 activity). Specifically targets phospholipids with a short-chain fatty acyl group at sn-2 position. Can hydrolyze phospholipids with long fatty acyl chains, only if they carry oxidized functional groups. Hydrolyzes and inactivates platelet-activating factor (PAF, 1-O-alkyl-2-acetyl-sn-glycero-3-phosphocholine), a potent pro-inflammatory signaling lipid that acts through PTAFR on various innate immune cells. Hydrolyzes oxidatively truncated phospholipids carrying an aldehyde group at omega position, preventing their accumulation in lipoprotein particles and uncontrolled pro-inflammatory effects. As part of high-density lipoprotein (HDL) particles, can hydrolyze phospholipids having long-chain fatty acyl hydroperoxides at sn-2 position and protect against potential accumulation of these oxylipins in the vascular wall. Catalyzes the release from membrane phospholipids of F2-isoprostanes, lipid biomarkers of cellular oxidative damage. The sequence is that of Platelet-activating factor acetylhydrolase (PLA2G7) from Cavia porcellus (Guinea pig).